A 138-amino-acid chain; its full sequence is MLIPKRVKYRRQHRPTRSGISKGGNRVTFGEYGIQALEPAYITNRQIESARIAINRHVKRGGKVWINIFPDRPLTQKPLGVRMGSGKGPVEKWVANIKPGRILFEMSYPDEATALEALRRAGQKLPCKVRIVKREDQL.

The span at 1–16 shows a compositional bias: basic residues; it reads MLIPKRVKYRRQHRPT. The segment at 1–23 is disordered; the sequence is MLIPKRVKYRRQHRPTRSGISKG.

Belongs to the universal ribosomal protein uL16 family. Part of the 50S ribosomal subunit.

Functionally, binds 23S rRNA and is also seen to make contacts with the A and possibly P site tRNAs. The sequence is that of Large ribosomal subunit protein uL16 from Corynebacterium glutamicum (strain R).